Reading from the N-terminus, the 462-residue chain is S-alkyl-thiohydroximate lyase SUR1 (462 aa).

It belongs to the class-I pyridoxal-phosphate-dependent aminotransferase family. Pyridoxal 5'-phosphate serves as cofactor.

Functionally, C-S lyase involved in glucosinolate biosynthesis. Converts S-(alkylacetohydroximoyl)-L-cysteine to thiohydroximate. Functions in auxin homeostasis. Probably required for glucosinolate activation in response to pathogens. The polypeptide is S-alkyl-thiohydroximate lyase SUR1 (SUR1) (Arabidopsis thaliana (Mouse-ear cress)).